A 103-amino-acid polypeptide reads, in one-letter code: Ig kappa-b5 chain C region (103 aa).

In terms of domain architecture, Ig-like spans 5–99 (PTVLIFPPAP…GAGSVVQSFS (95 aa)). A disulfide bridge connects residues Cys26 and Cys85.

This Oryctolagus cuniculus (Rabbit) protein is Ig kappa-b5 chain C region.